A 129-amino-acid polypeptide reads, in one-letter code: Histone H2A.2 (129 aa).

Lys5 is modified (N6-acetyllysine). Position 108 is an N5-methylglutamine (Gln108).

The protein belongs to the histone H2A family. As to quaternary structure, the nucleosome is a histone octamer containing two molecules each of H2A, H2B, H3 and H4 assembled in one H3-H4 heterotetramer and two H2A-H2B heterodimers. The octamer wraps approximately 147 bp of DNA. Post-translationally, acetylated by ESA1 to form H2AK4ac.

The protein localises to the nucleus. It localises to the chromosome. Its function is as follows. Core component of nucleosome which plays a central role in DNA double strand break (DSB) repair. Nucleosomes wrap and compact DNA into chromatin, limiting DNA accessibility to the cellular machineries which require DNA as a template. Histones thereby play a central role in transcription regulation, DNA repair, DNA replication and chromosomal stability. DNA accessibility is regulated via a complex set of post-translational modifications of histones, also called histone code, and nucleosome remodeling. The protein is Histone H2A.2 (HTA2) of Lodderomyces elongisporus (strain ATCC 11503 / CBS 2605 / JCM 1781 / NBRC 1676 / NRRL YB-4239) (Yeast).